A 523-amino-acid chain; its full sequence is Cyclin-dependent kinase 17 (523 aa).

Phosphoserine is present on Ser-9. Residues 30 to 55 form a disordered region; that stretch reads TIEENSSKDNEPIVKNGRPPTSHSMH. Ser-80, Ser-92, and Ser-105 each carry phosphoserine. The segment at 103–123 is disordered; sequence MGSDGESDQASGTSSDEVQSP. A compositionally biased stretch (polar residues) spans 110 to 123; the sequence is DQASGTSSDEVQSP. Ser-137, Ser-146, Ser-165, and Ser-180 each carry phosphoserine. A Protein kinase domain is found at 192–473; it reads YIKLEKLGEG…AEEAMKHVYF (282 aa). ATP-binding positions include 198–206 and Lys-221; that span reads LGEGTYATV. The active-site Proton acceptor is the Asp-313. A disordered region spans residues 501–523; that stretch reads PGFRNSSYPETGHGKNRRQSMLF. Residues 514-523 are compositionally biased toward basic residues; sequence GKNRRQSMLF.

Belongs to the protein kinase superfamily. CMGC Ser/Thr protein kinase family. CDC2/CDKX subfamily. Found in a complex containing CABLES1, CDK16 and TDRD7. Interacts with TDRD7.

The enzyme catalyses L-seryl-[protein] + ATP = O-phospho-L-seryl-[protein] + ADP + H(+). It carries out the reaction L-threonyl-[protein] + ATP = O-phospho-L-threonyl-[protein] + ADP + H(+). Functionally, may play a role in terminally differentiated neurons. Has a Ser/Thr-phosphorylating activity for histone H1. The protein is Cyclin-dependent kinase 17 (CDK17) of Homo sapiens (Human).